A 252-amino-acid polypeptide reads, in one-letter code: MILRAQANGGQPGSPWLVFLHGFSGDCREWQQIGEQFPDFSRLYIDLPGHGDSADIRVSGFADVCDLLRNTLFSYNILKYWLVGYSLGGRVAMMAACQTLPGFCGLVVEGGHPGLQREAERDARRRSDGRWAARFRREPLRDVFTDWYQQPVFASLDASQREALVALRSQNNGETLAAMLEATSLAVQPDLRARLNARTFPFYYLCGERDSKFRALAAELSVPCHMIRNAGHNAHRENPAGVVDSLAQILRL.

The protein belongs to the AB hydrolase superfamily. MenH family. Monomer.

It carries out the reaction 5-enolpyruvoyl-6-hydroxy-2-succinyl-cyclohex-3-ene-1-carboxylate = (1R,6R)-6-hydroxy-2-succinyl-cyclohexa-2,4-diene-1-carboxylate + pyruvate. Its pathway is quinol/quinone metabolism; 1,4-dihydroxy-2-naphthoate biosynthesis; 1,4-dihydroxy-2-naphthoate from chorismate: step 3/7. It functions in the pathway quinol/quinone metabolism; menaquinone biosynthesis. In terms of biological role, catalyzes a proton abstraction reaction that results in 2,5-elimination of pyruvate from 2-succinyl-5-enolpyruvyl-6-hydroxy-3-cyclohexene-1-carboxylate (SEPHCHC) and the formation of 2-succinyl-6-hydroxy-2,4-cyclohexadiene-1-carboxylate (SHCHC). The protein is 2-succinyl-6-hydroxy-2,4-cyclohexadiene-1-carboxylate synthase of Citrobacter koseri (strain ATCC BAA-895 / CDC 4225-83 / SGSC4696).